We begin with the raw amino-acid sequence, 165 residues long: UPF0669 protein v1g209471 (165 aa).

The N-terminal stretch at 1-23 is a signal peptide; it reads MQGRYSAPLFLLLWLFFLHGTLC. A glycan (N-linked (GlcNAc...) asparagine) is linked at N38.

It belongs to the UPF0669 family.

It is found in the secreted. This is UPF0669 protein v1g209471 from Nematostella vectensis (Starlet sea anemone).